Consider the following 218-residue polypeptide: Pyridoxine/pyridoxamine 5'-phosphate oxidase (218 aa).

Substrate contacts are provided by residues 11-14 (RVEY) and Lys-75. Residues 70–75 (RTVLCK), 85–86 (YT), Lys-92, and Gln-114 contribute to the FMN site. Substrate is bound by residues Tyr-132, Arg-136, and Ser-140. Residues 149-150 (QS) and Trp-195 each bind FMN. 201 to 203 (RVH) provides a ligand contact to substrate. Residue Arg-205 participates in FMN binding.

Belongs to the pyridoxamine 5'-phosphate oxidase family. In terms of assembly, homodimer. Requires FMN as cofactor.

The catalysed reaction is pyridoxamine 5'-phosphate + O2 + H2O = pyridoxal 5'-phosphate + H2O2 + NH4(+). It catalyses the reaction pyridoxine 5'-phosphate + O2 = pyridoxal 5'-phosphate + H2O2. It participates in cofactor metabolism; pyridoxal 5'-phosphate salvage; pyridoxal 5'-phosphate from pyridoxamine 5'-phosphate: step 1/1. It functions in the pathway cofactor metabolism; pyridoxal 5'-phosphate salvage; pyridoxal 5'-phosphate from pyridoxine 5'-phosphate: step 1/1. In terms of biological role, catalyzes the oxidation of either pyridoxine 5'-phosphate (PNP) or pyridoxamine 5'-phosphate (PMP) into pyridoxal 5'-phosphate (PLP). The protein is Pyridoxine/pyridoxamine 5'-phosphate oxidase of Mycolicibacterium gilvum (strain PYR-GCK) (Mycobacterium gilvum (strain PYR-GCK)).